The following is a 142-amino-acid chain: Small heat shock protein IbpB (142 aa).

Residues 26–137 form the sHSP domain; it reads TAEHQAFPPY…APQRIAISDR (112 aa).

Belongs to the small heat shock protein (HSP20) family. In terms of assembly, homodimer. Forms homomultimers of about 100-150 subunits at optimal growth temperatures. Conformation changes to oligomers at high temperatures or high ionic concentrations. The decrease in size of the multimers is accompanied by an increase in chaperone activity.

It localises to the cytoplasm. In terms of biological role, associates with aggregated proteins, together with IbpA, to stabilize and protect them from irreversible denaturation and extensive proteolysis during heat shock and oxidative stress. Aggregated proteins bound to the IbpAB complex are more efficiently refolded and reactivated by the ATP-dependent chaperone systems ClpB and DnaK/DnaJ/GrpE. Its activity is ATP-independent. The sequence is that of Small heat shock protein IbpB from Enterobacter sp. (strain 638).